The chain runs to 247 residues: Ribosomal RNA small subunit methyltransferase G (247 aa).

S-adenosyl-L-methionine-binding positions include G84, F89, 136 to 137 (AE), and R155.

This sequence belongs to the methyltransferase superfamily. RNA methyltransferase RsmG family.

It is found in the cytoplasm. In terms of biological role, specifically methylates the N7 position of a guanine in 16S rRNA. The chain is Ribosomal RNA small subunit methyltransferase G from Prochlorococcus marinus (strain MIT 9303).